An 87-amino-acid polypeptide reads, in one-letter code: Large ribosomal subunit protein bL31B (87 aa).

This sequence belongs to the bacterial ribosomal protein bL31 family. Type B subfamily. Part of the 50S ribosomal subunit.

This chain is Large ribosomal subunit protein bL31B, found in Shigella boydii serotype 4 (strain Sb227).